Consider the following 156-residue polypeptide: Small ribosomal subunit protein uS7 (156 aa).

Belongs to the universal ribosomal protein uS7 family. As to quaternary structure, part of the 30S ribosomal subunit. Contacts proteins S9 and S11.

Its function is as follows. One of the primary rRNA binding proteins, it binds directly to 16S rRNA where it nucleates assembly of the head domain of the 30S subunit. Is located at the subunit interface close to the decoding center, probably blocks exit of the E-site tRNA. The chain is Small ribosomal subunit protein uS7 from Streptococcus pyogenes serotype M12 (strain MGAS2096).